Here is a 160-residue protein sequence, read N- to C-terminus: MIHLDYQVAAEEVDEAELPTYEQCLKWVEVALLDDRLDGETELTIRIVDEDEIQTLNRDYRGKDQTTNVLSFPFENPPVLVDLGEELPYIGDLVICAQVVAQEAKAQHKPLEAHWAHMVIHGCLHLQGMDHVDDDEAIKMEALEAEILADLGYDSPYESD.

Histidine 121, histidine 125, and histidine 131 together coordinate Zn(2+).

Belongs to the endoribonuclease YbeY family. Requires Zn(2+) as cofactor.

The protein resides in the cytoplasm. Functionally, single strand-specific metallo-endoribonuclease involved in late-stage 70S ribosome quality control and in maturation of the 3' terminus of the 16S rRNA. The polypeptide is Endoribonuclease YbeY (Hydrogenovibrio crunogenus (strain DSM 25203 / XCL-2) (Thiomicrospira crunogena)).